The chain runs to 92 residues: RNA-binding protein Hfq (92 aa).

In terms of domain architecture, Sm spans 9 to 68 (DPFLNALRRERVPVSIYLVNGIKLQGQVESFDQFVILLKNTVSQMVYKHAISTVVPSRPF).

The protein belongs to the Hfq family. As to quaternary structure, homohexamer.

Functionally, RNA chaperone that binds small regulatory RNA (sRNAs) and mRNAs to facilitate mRNA translational regulation in response to envelope stress, environmental stress and changes in metabolite concentrations. Also binds with high specificity to tRNAs. The polypeptide is RNA-binding protein Hfq (Shewanella piezotolerans (strain WP3 / JCM 13877)).